A 496-amino-acid polypeptide reads, in one-letter code: Probable cytosol aminopeptidase (496 aa).

Residues Lys-266 and Asp-271 each contribute to the Mn(2+) site. Residue Lys-278 is part of the active site. Positions 289, 348, and 350 each coordinate Mn(2+). Arg-352 is a catalytic residue.

This sequence belongs to the peptidase M17 family. Requires Mn(2+) as cofactor.

It localises to the cytoplasm. It catalyses the reaction Release of an N-terminal amino acid, Xaa-|-Yaa-, in which Xaa is preferably Leu, but may be other amino acids including Pro although not Arg or Lys, and Yaa may be Pro. Amino acid amides and methyl esters are also readily hydrolyzed, but rates on arylamides are exceedingly low.. It carries out the reaction Release of an N-terminal amino acid, preferentially leucine, but not glutamic or aspartic acids.. Its function is as follows. Presumably involved in the processing and regular turnover of intracellular proteins. Catalyzes the removal of unsubstituted N-terminal amino acids from various peptides. This Stutzerimonas stutzeri (strain A1501) (Pseudomonas stutzeri) protein is Probable cytosol aminopeptidase.